The sequence spans 243 residues: tRNA pseudouridine synthase A (243 aa).

D51 acts as the Nucleophile in catalysis. Y111 is a substrate binding site.

It belongs to the tRNA pseudouridine synthase TruA family. In terms of assembly, homodimer.

The catalysed reaction is uridine(38/39/40) in tRNA = pseudouridine(38/39/40) in tRNA. Functionally, formation of pseudouridine at positions 38, 39 and 40 in the anticodon stem and loop of transfer RNAs. In Neorickettsia sennetsu (strain ATCC VR-367 / Miyayama) (Ehrlichia sennetsu), this protein is tRNA pseudouridine synthase A.